The following is a 266-amino-acid chain: 3-methyl-2-oxobutanoate hydroxymethyltransferase 2 (266 aa).

Residues aspartate 45 and aspartate 84 each coordinate Mg(2+). 3-methyl-2-oxobutanoate-binding positions include aspartate 45 to serine 46, aspartate 84, and lysine 112. Residue glutamate 114 participates in Mg(2+) binding. The Proton acceptor role is filled by glutamate 181.

The protein belongs to the PanB family. Homodecamer; pentamer of dimers. The cofactor is Mg(2+).

The protein resides in the cytoplasm. The catalysed reaction is 3-methyl-2-oxobutanoate + (6R)-5,10-methylene-5,6,7,8-tetrahydrofolate + H2O = 2-dehydropantoate + (6S)-5,6,7,8-tetrahydrofolate. The protein operates within cofactor biosynthesis; (R)-pantothenate biosynthesis; (R)-pantoate from 3-methyl-2-oxobutanoate: step 1/2. Its function is as follows. Catalyzes the reversible reaction in which hydroxymethyl group from 5,10-methylenetetrahydrofolate is transferred onto alpha-ketoisovalerate to form ketopantoate. This chain is 3-methyl-2-oxobutanoate hydroxymethyltransferase 2, found in Pseudomonas entomophila (strain L48).